Reading from the N-terminus, the 287-residue chain is Small ribosomal subunit protein uS3 (287 aa).

The KH type-2 domain occupies 38–106 (IRRLLATGLE…QVQLNILEVK (69 aa)). The interval 216–287 (AAAPAGADRP…AETTTQNPGS (72 aa)) is disordered. Low complexity predominate over residues 238 to 287 (SGASGTTATSTDAGRAASGTQEAPAAAEAAAGTEAAAGAAAETTTQNPGS).

Belongs to the universal ribosomal protein uS3 family. In terms of assembly, part of the 30S ribosomal subunit. Forms a tight complex with proteins S10 and S14.

Binds the lower part of the 30S subunit head. Binds mRNA in the 70S ribosome, positioning it for translation. This is Small ribosomal subunit protein uS3 from Mycobacterium sp. (strain JLS).